The sequence spans 92 residues: Small ribosomal subunit protein uS19 (92 aa).

It belongs to the universal ribosomal protein uS19 family.

Functionally, protein S19 forms a complex with S13 that binds strongly to the 16S ribosomal RNA. The protein is Small ribosomal subunit protein uS19 of Rickettsia akari (strain Hartford).